The following is a 95-amino-acid chain: Co-chaperonin GroES (95 aa).

The tract at residues 36–55 (QEGEVVAVGSGKTLDDGSKV) is disordered.

It belongs to the GroES chaperonin family. In terms of assembly, heptamer of 7 subunits arranged in a ring. Interacts with the chaperonin GroEL.

It localises to the cytoplasm. Functionally, together with the chaperonin GroEL, plays an essential role in assisting protein folding. The GroEL-GroES system forms a nano-cage that allows encapsulation of the non-native substrate proteins and provides a physical environment optimized to promote and accelerate protein folding. GroES binds to the apical surface of the GroEL ring, thereby capping the opening of the GroEL channel. This chain is Co-chaperonin GroES, found in Natranaerobius thermophilus (strain ATCC BAA-1301 / DSM 18059 / JW/NM-WN-LF).